A 183-amino-acid polypeptide reads, in one-letter code: Putative 3-methyladenine DNA glycosylase (183 aa).

Belongs to the DNA glycosylase MPG family.

The sequence is that of Putative 3-methyladenine DNA glycosylase from Rickettsia peacockii (strain Rustic).